The following is a 563-amino-acid chain: Rhotekin (563 aa).

R14 carries the post-translational modification Omega-N-methylarginine. An REM-1 domain is found at A17 to L98. 2 positions are modified to phosphoserine: S30 and S106. The tract at residues Q96 to P116 is disordered. Asymmetric dimethylarginine is present on R230. Position 232 is a phosphoserine (S232). The region spanning Q309 to F416 is the PH domain. The disordered stretch occupies residues T518–V563. S520, S529, and S543 each carry phosphoserine.

In terms of assembly, interacts via its C-terminal region with the TAX1BP3 PDZ domain. This interaction facilitates Rho-mediated activation of the c-Fos serum response element (SRE). Interacts with SEPT9. Specifically binds to GTP-bound RHOA, RHOB and RHOC and inhibits their GTPase activity. As to expression, highly expressed in prostate, moderately in kidney, heart, brain, spleen, testis, placenta, small intestine, pancreas, skeletal muscle and peripheral blood leukocytes, and weakly in ovary, colon and thymus. Weakly expressed in all normal cell lines tested. Overexpressed in various cancer cell lines.

In terms of biological role, mediates Rho signaling to activate NF-kappa-B and may confer increased resistance to apoptosis to cells in gastric tumorigenesis. May play a novel role in the organization of septin structures. This chain is Rhotekin, found in Homo sapiens (Human).